The following is a 194-amino-acid chain: Molybdenum cofactor guanylyltransferase (194 aa).

GTP is bound by residues 12-14 (LAG), K25, D71, and D101. D101 lines the Mg(2+) pocket.

Belongs to the MobA family. As to quaternary structure, monomer. Requires Mg(2+) as cofactor.

It localises to the cytoplasm. The enzyme catalyses Mo-molybdopterin + GTP + H(+) = Mo-molybdopterin guanine dinucleotide + diphosphate. Functionally, transfers a GMP moiety from GTP to Mo-molybdopterin (Mo-MPT) cofactor (Moco or molybdenum cofactor) to form Mo-molybdopterin guanine dinucleotide (Mo-MGD) cofactor. This is Molybdenum cofactor guanylyltransferase from Salmonella typhimurium (strain LT2 / SGSC1412 / ATCC 700720).